The sequence spans 266 residues: Luciferase (266 aa).

The chain crosses the membrane as a helical span at residues 22-41 (GLATACCAVAVASAIAFPYI).

It belongs to the fungal luciferase family.

The protein localises to the membrane. The catalysed reaction is 3-hydroxyhispidin + O2 = (E)-caffeoylpyruvate + hnu + CO2. It catalyses the reaction 3-hydroxyhispidin + O2 = 4-[(E)-2-(3,4-dihydroxyphenyl)ethenyl]-1,7-dihydroxy-2,3,5-trioxabicyclo[2.2.2]oct-7-en-6-one. Functionally, luciferase; part of the gene cluster that mediates the fungal bioluminescence cycle. Uses the fungal luciferin 3-hydroxyhispidin as a substrate to produce an endoperoxide as a high-energy intermediate with decomposition that yields oxyluciferin (also known as caffeoylpyruvate) and light emission. The fungal bioluminescence cycle begins with the hispidin synthetase that catalyzes the formation of hispidin which is further hydroxylated by the hispidin-3-hydroxylase, yielding the fungal luciferin 3-hydroxyhispidin. The luciferase then produces an endoperoxide as a high-energy intermediate with decomposition that yields oxyluciferin and light emission. Oxyluciferin can be recycled to caffeic acid by caffeoylpyruvate hydrolase. The polypeptide is Luciferase (Armillaria ostoyae (Armillaria root rot fungus)).